The chain runs to 330 residues: Ketol-acid reductoisomerase (NADP(+)) (330 aa).

The KARI N-terminal Rossmann domain maps to 1 to 181 (MKVLYDDDVN…GLTRAGVIET (181 aa)). NADP(+) is bound by residues 24–27 (YGSQ), R47, S52, and 82–85 (DEIQ). Residue H107 is part of the active site. An NADP(+)-binding site is contributed by G133. The KARI C-terminal knotted domain maps to 182 to 327 (TYREETETDL…KNLRIACGLQ (146 aa)). Positions 190, 194, 226, and 230 each coordinate Mg(2+). S251 lines the substrate pocket.

This sequence belongs to the ketol-acid reductoisomerase family. Mg(2+) is required as a cofactor.

The catalysed reaction is (2R)-2,3-dihydroxy-3-methylbutanoate + NADP(+) = (2S)-2-acetolactate + NADPH + H(+). It catalyses the reaction (2R,3R)-2,3-dihydroxy-3-methylpentanoate + NADP(+) = (S)-2-ethyl-2-hydroxy-3-oxobutanoate + NADPH + H(+). Its pathway is amino-acid biosynthesis; L-isoleucine biosynthesis; L-isoleucine from 2-oxobutanoate: step 2/4. The protein operates within amino-acid biosynthesis; L-valine biosynthesis; L-valine from pyruvate: step 2/4. Involved in the biosynthesis of branched-chain amino acids (BCAA). Catalyzes an alkyl-migration followed by a ketol-acid reduction of (S)-2-acetolactate (S2AL) to yield (R)-2,3-dihydroxy-isovalerate. In the isomerase reaction, S2AL is rearranged via a Mg-dependent methyl migration to produce 3-hydroxy-3-methyl-2-ketobutyrate (HMKB). In the reductase reaction, this 2-ketoacid undergoes a metal-dependent reduction by NADPH to yield (R)-2,3-dihydroxy-isovalerate. The sequence is that of Ketol-acid reductoisomerase (NADP(+)) from Methanosphaera stadtmanae (strain ATCC 43021 / DSM 3091 / JCM 11832 / MCB-3).